Reading from the N-terminus, the 149-residue chain is Calmodulin (149 aa).

An N-acetylalanine modification is found at Ala2. EF-hand domains are found at residues Glu8–Asn43, Pro44–Asp79, Asp81–Lys116, and Leu117–Lys149. Positions 21, 23, 25, 27, 32, 57, 59, 61, 63, 68, 94, 96, 98, and 105 each coordinate Ca(2+). The residue at position 116 (Lys116) is an N6,N6,N6-trimethyllysine. Positions 130, 132, 134, 136, and 141 each coordinate Ca(2+).

This sequence belongs to the calmodulin family.

In terms of biological role, calmodulin mediates the control of a large number of enzymes, ion channels and other proteins by Ca(2+). Among the enzymes to be stimulated by the calmodulin-Ca(2+) complex are a number of protein kinases and phosphatases. The sequence is that of Calmodulin from Pyuridae sp. (Sea squirt).